A 224-amino-acid polypeptide reads, in one-letter code: Probable molybdenum cofactor guanylyltransferase (224 aa).

GTP contacts are provided by residues 20-22 (LAG), K33, D88, and D117. D117 contributes to the Mg(2+) binding site.

Belongs to the MobA family. The cofactor is Mg(2+).

The protein resides in the cytoplasm. The enzyme catalyses Mo-molybdopterin + GTP + H(+) = Mo-molybdopterin guanine dinucleotide + diphosphate. Its function is as follows. Transfers a GMP moiety from GTP to Mo-molybdopterin (Mo-MPT) cofactor (Moco or molybdenum cofactor) to form Mo-molybdopterin guanine dinucleotide (Mo-MGD) cofactor. The polypeptide is Probable molybdenum cofactor guanylyltransferase (Methanosarcina mazei (strain ATCC BAA-159 / DSM 3647 / Goe1 / Go1 / JCM 11833 / OCM 88) (Methanosarcina frisia)).